The chain runs to 503 residues: Aminoaldehyde dehydrogenase 2, peroxisomal (503 aa).

Na(+) is bound by residues Ile-28, Asp-99, and Leu-189. 238–245 (GSTMTGSK) is a binding site for NAD(+). Glu-260 acts as the Proton acceptor in catalysis. 2 residues coordinate NAD(+): Cys-294 and Glu-393. The active-site Nucleophile is the Cys-294. A Microbody targeting signal motif is present at residues 501–503 (SKL).

Belongs to the aldehyde dehydrogenase family. In terms of tissue distribution, expressed in leaves, flowers and fruits.

It is found in the peroxisome. It carries out the reaction 4-aminobutanal + NAD(+) + H2O = 4-aminobutanoate + NADH + 2 H(+). It catalyses the reaction 3-aminopropanal + NAD(+) + H2O = beta-alanine + NADH + 2 H(+). Its pathway is amine and polyamine biosynthesis; betaine biosynthesis via choline pathway; betaine from betaine aldehyde: step 1/1. Dehydrogenase that catalyzes the oxidation of several aminoaldehydes. Metabolizes and detoxifies aldehyde products of polyamine degradation to non-toxic amino acids. Catalyzes the oxidation of 4-aminobutanal and 3-aminopropanal to 4-aminobutanoate and beta-alanine, respectively. This chain is Aminoaldehyde dehydrogenase 2, peroxisomal, found in Malus domestica (Apple).